The primary structure comprises 372 residues: MTTAKINLLDFDRKGLRAFFSEELGEKAFRADQVMKWMYHFGCDDFDQMNNINKKLREKLKHKCEIRAPYVSEAQHSSDGTIKWAMKVGDQDVETVYIPDGDRATLCVSSQVGCALECKFCSTAQQGFNRNLKVSEIVGQIWRAAREIGLEKETGRRPITNVVMMGMGEPLLNMKNLIPALEIMLDDLGFALSKRRVTVSTSGVVSGLDQMTGKIDVALAISLHAPTDELRSQIMPINDRWDIDAFLASVRRYIASSNANRGRVTVEYVLLDHVNDDMDHARQLAELLKDTPAKINLIPFNPYPGSPYKKPSNSRIDRFMKTLMEYDYTVTIRKTRGDDIDAACGQLVGDVIDRTKRTKVKQQGEAIPVKTV.

The Proton acceptor role is filled by E94. Positions 100–339 constitute a Radical SAM core domain; it reads DGDRATLCVS…VTIRKTRGDD (240 aa). The cysteines at positions 107 and 344 are disulfide-linked. Residues C114, C118, and C121 each contribute to the [4Fe-4S] cluster site. S-adenosyl-L-methionine is bound by residues 168–169, S200, 222–224, and N301; these read GE and SLH. Residue C344 is the S-methylcysteine intermediate of the active site.

Belongs to the radical SAM superfamily. RlmN family. The cofactor is [4Fe-4S] cluster.

It localises to the cytoplasm. The catalysed reaction is adenosine(2503) in 23S rRNA + 2 reduced [2Fe-2S]-[ferredoxin] + 2 S-adenosyl-L-methionine = 2-methyladenosine(2503) in 23S rRNA + 5'-deoxyadenosine + L-methionine + 2 oxidized [2Fe-2S]-[ferredoxin] + S-adenosyl-L-homocysteine. The enzyme catalyses adenosine(37) in tRNA + 2 reduced [2Fe-2S]-[ferredoxin] + 2 S-adenosyl-L-methionine = 2-methyladenosine(37) in tRNA + 5'-deoxyadenosine + L-methionine + 2 oxidized [2Fe-2S]-[ferredoxin] + S-adenosyl-L-homocysteine. Functionally, specifically methylates position 2 of adenine 2503 in 23S rRNA and position 2 of adenine 37 in tRNAs. m2A2503 modification seems to play a crucial role in the proofreading step occurring at the peptidyl transferase center and thus would serve to optimize ribosomal fidelity. The polypeptide is Dual-specificity RNA methyltransferase RlmN (Aliivibrio fischeri (strain ATCC 700601 / ES114) (Vibrio fischeri)).